We begin with the raw amino-acid sequence, 255 residues long: Leucyl/phenylalanyl-tRNA--protein transferase (255 aa).

Belongs to the L/F-transferase family.

The protein resides in the cytoplasm. The catalysed reaction is N-terminal L-lysyl-[protein] + L-leucyl-tRNA(Leu) = N-terminal L-leucyl-L-lysyl-[protein] + tRNA(Leu) + H(+). The enzyme catalyses N-terminal L-arginyl-[protein] + L-leucyl-tRNA(Leu) = N-terminal L-leucyl-L-arginyl-[protein] + tRNA(Leu) + H(+). It catalyses the reaction L-phenylalanyl-tRNA(Phe) + an N-terminal L-alpha-aminoacyl-[protein] = an N-terminal L-phenylalanyl-L-alpha-aminoacyl-[protein] + tRNA(Phe). In terms of biological role, functions in the N-end rule pathway of protein degradation where it conjugates Leu, Phe and, less efficiently, Met from aminoacyl-tRNAs to the N-termini of proteins containing an N-terminal arginine or lysine. The polypeptide is Leucyl/phenylalanyl-tRNA--protein transferase (Polaromonas sp. (strain JS666 / ATCC BAA-500)).